The chain runs to 595 residues: Sorting nexin-9 (595 aa).

The region spanning 1–62 is the SH3 domain; it reads MATKARVMYD…PTDYVEILPN (62 aa). Over residues 89–100 the composition is skewed to low complexity; the sequence is QTNSSSANSNNQ. The disordered stretch occupies residues 89–199; the sequence is QTNSSSANSN…QRGNSRAGAS (111 aa). At Ser-121 the chain carries Phosphoserine. The segment covering 129 to 144 has biased composition (polar residues); the sequence is TDGTSAQRNSSANNWD. Acidic residues predominate over residues 159–169; it reads GDDDEWDEDWD. Ser-200 carries the post-translational modification Phosphoserine. The critical for tubulation activity stretch occupies residues 201 to 213; it reads MKLPLNKFPGFAK. The residue at position 239 (Tyr-239) is a Phosphotyrosine. The PX domain occupies 250–360; the sequence is FDCVVADPRK…QQFLNFRDEK (111 aa). Positions 286, 288, and 327 each coordinate a 1,2-diacyl-sn-glycero-3-phospho-(1D-myo-inositol-4,5-bisphosphate). The residue at position 288 (Lys-288) is an N6-acetyllysine. One can recognise a BAR domain in the interval 392–595; it reads LIEIEQKCDA…RQALSRFPVM (204 aa).

Belongs to the sorting nexin family. As to quaternary structure, homodimer, and homooligomer. Heterodimer with SNX18. Interacts with ITCH. Interacts (via SH3 domain) with TNK2, WASL and ACTR3. Identified in a complex with TNK2 and clathrin heavy chains. Identified in a complex with the AP-2 complex, clathrin and DNM2. Interacts (via SH3 domain) with DNM1 and DNM2. Identified in an oligomeric complex containing DNM1 and SNX9. Interacts with FCHSD1. Interacts with ADAM9 and ADAM15 cytoplasmic tails. In terms of processing, phosphorylated on tyrosine residues by TNK2. Phosphorylation promotes its activity in the degradation of EGFR. Ubiquitinated by ITCH. In terms of tissue distribution, detected in inner ear vestibula and in the cuticular plate of cochlear hair cells (at protein level).

The protein localises to the cytoplasmic vesicle membrane. It localises to the cell membrane. The protein resides in the cytoplasmic vesicle. Its subcellular location is the clathrin-coated vesicle. It is found in the golgi apparatus. The protein localises to the trans-Golgi network. It localises to the cell projection. The protein resides in the ruffle. Its subcellular location is the cytoplasm. Its function is as follows. Involved in endocytosis and intracellular vesicle trafficking, both during interphase and at the end of mitosis. Required for efficient progress through mitosis and cytokinesis. Required for normal formation of the cleavage furrow at the end of mitosis. Plays a role in endocytosis via clathrin-coated pits, but also clathrin-independent, actin-dependent fluid-phase endocytosis. Plays a role in macropinocytosis. Promotes internalization of TNFR. Promotes degradation of EGFR after EGF signaling. Stimulates the GTPase activity of DNM1. Promotes DNM1 oligomerization. Promotes activation of the Arp2/3 complex by WASL, and thereby plays a role in the reorganization of the F-actin cytoskeleton. Binds to membranes enriched in phosphatidylinositol 4,5-bisphosphate and promotes membrane tubulation. Has lower affinity for membranes enriched in phosphatidylinositol 3-phosphate. The polypeptide is Sorting nexin-9 (Snx9) (Mus musculus (Mouse)).